The primary structure comprises 187 residues: MIVAKKYFLVLSFLFVQFALLPQAFSADKGWFDTLKDNVSETWQQPEHYDLYVPAITWHARFAYDKEKTDRYNERPWGAGFGQSRWDDKGNWHGLYIMAFKDSFNKWEPIGGYGWEKTWRPLADENFHMGLGFTAGATARDNWKYIPVPVLLPLASIGYGPATFQMTYIPGTYNNGNVYFAWMRFQF.

The signal sequence occupies residues 1–26; sequence MIVAKKYFLVLSFLFVQFALLPQAFS. Residues His59, Asp102, and Ser103 contribute to the active site.

It belongs to the lipid A palmitoyltransferase family. As to quaternary structure, homodimer.

The protein localises to the cell outer membrane. It carries out the reaction a lipid A + a 1,2-diacyl-sn-glycero-3-phosphocholine = a hepta-acyl lipid A + a 2-acyl-sn-glycero-3-phosphocholine. The catalysed reaction is a lipid IVA + a 1,2-diacyl-sn-glycero-3-phosphocholine = a lipid IVB + a 2-acyl-sn-glycero-3-phosphocholine. The enzyme catalyses a lipid IIA + a 1,2-diacyl-sn-glycero-3-phosphocholine = a lipid IIB + a 2-acyl-sn-glycero-3-phosphocholine. Its function is as follows. Transfers a fatty acid residue from the sn-1 position of a phospholipid to the N-linked hydroxyfatty acid chain on the proximal unit of lipid A or its precursors. The protein is Lipid A acyltransferase PagP of Citrobacter koseri (strain ATCC BAA-895 / CDC 4225-83 / SGSC4696).